The chain runs to 548 residues: uncharacterized protein (548 aa).

A phosphoserine mark is found at Ser19 and Ser25. Thr47 carries the post-translational modification Phosphothreonine.

This is an uncharacterized protein from Schizosaccharomyces pombe (strain 972 / ATCC 24843) (Fission yeast).